The sequence spans 943 residues: Isoleucine--tRNA ligase (943 aa).

The 'HIGH' region signature appears at 58-68; it reads PYANGKIHIGH. Glu-567 serves as a coordination point for L-isoleucyl-5'-AMP. A 'KMSKS' region motif is present at residues 608-612; sequence KMSKS. Lys-611 contacts ATP. Positions 906, 909, 926, and 929 each coordinate Zn(2+).

It belongs to the class-I aminoacyl-tRNA synthetase family. IleS type 1 subfamily. As to quaternary structure, monomer. Zn(2+) serves as cofactor.

The protein localises to the cytoplasm. The catalysed reaction is tRNA(Ile) + L-isoleucine + ATP = L-isoleucyl-tRNA(Ile) + AMP + diphosphate. Its function is as follows. Catalyzes the attachment of isoleucine to tRNA(Ile). As IleRS can inadvertently accommodate and process structurally similar amino acids such as valine, to avoid such errors it has two additional distinct tRNA(Ile)-dependent editing activities. One activity is designated as 'pretransfer' editing and involves the hydrolysis of activated Val-AMP. The other activity is designated 'posttransfer' editing and involves deacylation of mischarged Val-tRNA(Ile). In Pseudomonas putida (strain W619), this protein is Isoleucine--tRNA ligase.